The following is a 318-amino-acid chain: UDP-N-acetylenolpyruvoylglucosamine reductase (318 aa).

Residues 38-204 (IGGVCPVIVE…LGIEILLKEG (167 aa)) enclose the FAD-binding PCMH-type domain. R182 is an active-site residue. Basic and acidic residues predominate over residues 212–229 (SLKDKRDRRNSSQPENKK). Positions 212-232 (SLKDKRDRRNSSQPENKKSAG) are disordered. Catalysis depends on S233, which acts as the Proton donor. E310 is an active-site residue.

This sequence belongs to the MurB family. FAD serves as cofactor.

It is found in the cytoplasm. It catalyses the reaction UDP-N-acetyl-alpha-D-muramate + NADP(+) = UDP-N-acetyl-3-O-(1-carboxyvinyl)-alpha-D-glucosamine + NADPH + H(+). Its pathway is cell wall biogenesis; peptidoglycan biosynthesis. Its function is as follows. Cell wall formation. This is UDP-N-acetylenolpyruvoylglucosamine reductase from Leptospira interrogans serogroup Icterohaemorrhagiae serovar Lai (strain 56601).